Reading from the N-terminus, the 198-residue chain is Elongation factor Ts (198 aa).

The involved in Mg(2+) ion dislocation from EF-Tu stretch occupies residues 81–84 (TDFV).

This sequence belongs to the EF-Ts family.

The protein resides in the cytoplasm. Functionally, associates with the EF-Tu.GDP complex and induces the exchange of GDP to GTP. It remains bound to the aminoacyl-tRNA.EF-Tu.GTP complex up to the GTP hydrolysis stage on the ribosome. This is Elongation factor Ts from Herpetosiphon aurantiacus (strain ATCC 23779 / DSM 785 / 114-95).